The primary structure comprises 389 residues: Lipid-A-disaccharide synthase (389 aa).

It belongs to the LpxB family.

It catalyses the reaction a lipid X + a UDP-2-N,3-O-bis[(3R)-3-hydroxyacyl]-alpha-D-glucosamine = a lipid A disaccharide + UDP + H(+). The protein operates within bacterial outer membrane biogenesis; LPS lipid A biosynthesis. In terms of biological role, condensation of UDP-2,3-diacylglucosamine and 2,3-diacylglucosamine-1-phosphate to form lipid A disaccharide, a precursor of lipid A, a phosphorylated glycolipid that anchors the lipopolysaccharide to the outer membrane of the cell. This chain is Lipid-A-disaccharide synthase, found in Verminephrobacter eiseniae (strain EF01-2).